Consider the following 547-residue polypeptide: Delta-guaiene synthase 2 (547 aa).

Mg(2+)-binding residues include aspartate 299, aspartate 303, and aspartate 444. A DDXXD motif motif is present at residues 299 to 303 (DDTYD).

It belongs to the terpene synthase family. It depends on Mg(2+) as a cofactor.

It catalyses the reaction (2E,6E)-farnesyl diphosphate = delta-guaiene + diphosphate. It carries out the reaction (2E,6E)-farnesyl diphosphate = alpha-guaiene + diphosphate. It participates in secondary metabolite biosynthesis; terpenoid biosynthesis. Sesquiterpene synthase involved in the biosynthesis of delta-guaiene (53.7%) and alpha-guaiene (44.6%), two structures composed of five- and seven-membered rings. Also produces 1.7% of alpha-humulene. This Aquilaria crassna (Eagle wood) protein is Delta-guaiene synthase 2 (C3).